An 83-amino-acid chain; its full sequence is Small ribosomal subunit protein eS21 (83 aa).

Methionine 1 is subject to N-acetylmethionine. A Glycyl lysine isopeptide (Lys-Gly) (interchain with G-Cter in SUMO2) cross-link involves residue lysine 41.

The protein belongs to the eukaryotic ribosomal protein eS21 family. In terms of assembly, component of the 40S small ribosomal subunit.

Its subcellular location is the cytoplasm. It localises to the cytosol. The protein localises to the rough endoplasmic reticulum. Component of the small ribosomal subunit. The ribosome is a large ribonucleoprotein complex responsible for the synthesis of proteins in the cell. In Oryctolagus cuniculus (Rabbit), this protein is Small ribosomal subunit protein eS21 (RPS21).